A 283-amino-acid chain; its full sequence is MAEITASLVKELRERTGAGMMDCKKALTEANGDIELAIENMRKSGAIKAAKKAGNVAADGVIKTKIDGNYGIILEVNCQTDFVAKDAGFQAFADKVLDAAVAGKITDVEVLKAQFEEERVALVAKIGENINIRRVAALEGDVLGSYQHGARIGVLVAAKGADEELVKHIAMHVAASKPEFIKPEDVSAEVVEKEYQVQLDIAMQSGKPKEIAEKMVEGRMKKFTGEVSLTGQPFVMEPSKTVGQLLKEHNAEVTGFIRFEVGEGIEKVETDFAAEVAAMSKQS.

Residues 80 to 83 are involved in Mg(2+) ion dislocation from EF-Tu; that stretch reads TDFV.

It belongs to the EF-Ts family.

The protein localises to the cytoplasm. Functionally, associates with the EF-Tu.GDP complex and induces the exchange of GDP to GTP. It remains bound to the aminoacyl-tRNA.EF-Tu.GTP complex up to the GTP hydrolysis stage on the ribosome. This Shigella boydii serotype 18 (strain CDC 3083-94 / BS512) protein is Elongation factor Ts.